Reading from the N-terminus, the 509-residue chain is Photosystem II CP47 reaction center protein (509 aa).

The next 6 helical transmembrane spans lie at 21 to 36 (AVHL…WAGS), 101 to 115 (IVLS…IWHW), 140 to 156 (GIHL…FGAF), 203 to 218 (IAAG…FHLT), 237 to 252 (VLSS…AFIT), and 457 to 472 (NFAL…HGSR).

Belongs to the PsbB/PsbC family. PsbB subfamily. In terms of assembly, PSII is composed of 1 copy each of membrane proteins PsbA, PsbB, PsbC, PsbD, PsbE, PsbF, PsbH, PsbI, PsbJ, PsbK, PsbL, PsbM, PsbT, PsbX, PsbY, PsbZ, Psb30/Ycf12, at least 3 peripheral proteins of the oxygen-evolving complex and a large number of cofactors. It forms dimeric complexes. The cofactor is Binds multiple chlorophylls. PSII binds additional chlorophylls, carotenoids and specific lipids..

It is found in the plastid. The protein localises to the chloroplast thylakoid membrane. One of the components of the core complex of photosystem II (PSII). It binds chlorophyll and helps catalyze the primary light-induced photochemical processes of PSII. PSII is a light-driven water:plastoquinone oxidoreductase, using light energy to abstract electrons from H(2)O, generating O(2) and a proton gradient subsequently used for ATP formation. This is Photosystem II CP47 reaction center protein from Porphyra purpurea (Red seaweed).